The primary structure comprises 744 residues: Probable ubiquitin carboxyl-terminal hydrolase MINDY-4 (744 aa).

A phosphoserine mark is found at serine 143, serine 220, and serine 224. The interval 211-358 (GMMAGPVASS…QLVSDRTDDK (148 aa)) is disordered. Positions 265 to 277 (VPDSSSDSVSRSP) are enriched in low complexity. Residues 290–299 (NVTSSSQGLS) show a composition bias toward polar residues. Serine 295 is subject to Phosphoserine. The span at 300–310 (QRDRPRLRSVS) shows a compositional bias: basic and acidic residues. The Nucleophile role is filled by cysteine 443. The Proton acceptor role is filled by histidine 664.

This sequence belongs to the MINDY deubiquitinase family. FAM188 subfamily.

The enzyme catalyses Thiol-dependent hydrolysis of ester, thioester, amide, peptide and isopeptide bonds formed by the C-terminal Gly of ubiquitin (a 76-residue protein attached to proteins as an intracellular targeting signal).. Functionally, probable hydrolase that can remove 'Lys-48'-linked conjugated ubiquitin from proteins. The sequence is that of Probable ubiquitin carboxyl-terminal hydrolase MINDY-4 (Mindy4) from Mus musculus (Mouse).